The following is a 284-amino-acid chain: Bifunctional protein FolD (284 aa).

NADP(+) contacts are provided by residues 165-167, Ser-190, and Ile-231; that span reads GAS.

The protein belongs to the tetrahydrofolate dehydrogenase/cyclohydrolase family. Homodimer.

It catalyses the reaction (6R)-5,10-methylene-5,6,7,8-tetrahydrofolate + NADP(+) = (6R)-5,10-methenyltetrahydrofolate + NADPH. The enzyme catalyses (6R)-5,10-methenyltetrahydrofolate + H2O = (6R)-10-formyltetrahydrofolate + H(+). The protein operates within one-carbon metabolism; tetrahydrofolate interconversion. Catalyzes the oxidation of 5,10-methylenetetrahydrofolate to 5,10-methenyltetrahydrofolate and then the hydrolysis of 5,10-methenyltetrahydrofolate to 10-formyltetrahydrofolate. This chain is Bifunctional protein FolD, found in Bordetella avium (strain 197N).